The primary structure comprises 419 residues: GTPase Obg (419 aa).

Positions 2-159 (SAFVDAVTVE…FLAKVELQVL (158 aa)) constitute an Obg domain. One can recognise an OBG-type G domain in the interval 160-325 (ADVGLLGYPN…LKYEIATTLK (166 aa)). GTP-binding positions include 166–173 (GYPNVGKS), 191–195 (FTTLS), 212–215 (DLPG), 279–282 (NKMD), and 306–308 (SAL). Residues serine 173 and threonine 193 each contribute to the Mg(2+) site. Residues 341-419 (LNAEDAVDFI…IFSYEFEYLE (79 aa)) enclose the OCT domain.

It belongs to the TRAFAC class OBG-HflX-like GTPase superfamily. OBG GTPase family. As to quaternary structure, monomer. It depends on Mg(2+) as a cofactor.

It localises to the cytoplasm. In terms of biological role, an essential GTPase which binds GTP, GDP and possibly (p)ppGpp with moderate affinity, with high nucleotide exchange rates and a fairly low GTP hydrolysis rate. Plays a role in control of the cell cycle, stress response, ribosome biogenesis and in those bacteria that undergo differentiation, in morphogenesis control. The sequence is that of GTPase Obg from Acholeplasma laidlawii (strain PG-8A).